The following is a 314-amino-acid chain: Polyadenylate-binding protein-interacting protein 8 (314 aa).

Residues 1–47 form a disordered region; it reads MAAITEMATDSNDVINDGGTGDGIEKSTDSKPEIESDDLKPKSKPEY. Residues 23 to 47 show a composition bias toward basic and acidic residues; it reads GIEKSTDSKPEIESDDLKPKSKPEY. Residues 59-69 carry the PAM2-like motif; sequence KLNPEAKEFFP. The Bipartite nuclear localization signal signature appears at 99-112; the sequence is RRRRNNYNQGRRVR. 2 RRM domains span residues 128–203 and 225–301; these read RTVY…PSKT and RTIY…PSKT.

Interacts with MPC. Expressed in cauline leaves, stems, rosette leaves, immature siliques and primary inflorescences but at a low level.

The protein resides in the nucleus. The chain is Polyadenylate-binding protein-interacting protein 8 (CID8) from Arabidopsis thaliana (Mouse-ear cress).